The chain runs to 560 residues: (E)-beta-farnesene synthase (560 aa).

Residues D312, D316, D457, and E465 each coordinate Mg(2+). Positions 312-316 (DDTFD) match the DDXXD motif motif.

The protein belongs to the terpene synthase family. Mg(2+) serves as cofactor. It depends on Co(2+) as a cofactor. The cofactor is Mn(2+).

It localises to the cytoplasm. It catalyses the reaction (2E,6E)-farnesyl diphosphate = (E)-beta-farnesene + diphosphate. The protein operates within secondary metabolite biosynthesis; terpenoid biosynthesis. Sesquiterpene cyclase catalyzing the production of beta-farnesene from farnesyl diphosphate. This chain is (E)-beta-farnesene synthase, found in Citrus junos (Yuzu).